The chain runs to 81 residues: Photosystem I iron-sulfur center (81 aa).

4Fe-4S ferredoxin-type domains lie at 2 to 31 (SHTVKIYDTCIGCTQCVRACPTDVLEMVPW) and 39 to 68 (IASSPRTEDCVGCKRCETACPTDFLSIRVY). The [4Fe-4S] cluster site is built by Cys11, Cys14, Cys17, Cys21, Cys48, Cys51, Cys54, and Cys58.

As to quaternary structure, the cyanobacterial PSI reaction center is composed of one copy each of PsaA,B,C,D,E,F,I,J,K,L,M and X, and forms trimeric complexes. It depends on [4Fe-4S] cluster as a cofactor.

Its subcellular location is the cellular thylakoid membrane. The enzyme catalyses reduced [plastocyanin] + hnu + oxidized [2Fe-2S]-[ferredoxin] = oxidized [plastocyanin] + reduced [2Fe-2S]-[ferredoxin]. Apoprotein for the two 4Fe-4S centers FA and FB of photosystem I (PSI); essential for photochemical activity. FB is the terminal electron acceptor of PSI, donating electrons to ferredoxin. The C-terminus interacts with PsaA/B/D and helps assemble the protein into the PSI complex. Required for binding of PsaD and PsaE to PSI. PSI is a plastocyanin/cytochrome c6-ferredoxin oxidoreductase, converting photonic excitation into a charge separation, which transfers an electron from the donor P700 chlorophyll pair to the spectroscopically characterized acceptors A0, A1, FX, FA and FB in turn. In Microchaete diplosiphon (Fremyella diplosiphon), this protein is Photosystem I iron-sulfur center.